The sequence spans 328 residues: Malate dehydrogenase (328 aa).

16–22 (GAAGQIS) provides a ligand contact to NAD(+). Residues arginine 97 and arginine 103 each coordinate substrate. Residues asparagine 110, glutamine 117, and 134–136 (VGN) each bind NAD(+). Asparagine 136 and arginine 167 together coordinate substrate. Histidine 192 (proton acceptor) is an active-site residue.

Belongs to the LDH/MDH superfamily. MDH type 2 family. As to quaternary structure, homotetramer.

It catalyses the reaction (S)-malate + NAD(+) = oxaloacetate + NADH + H(+). With respect to regulation, citrate activates the enzyme in the oxidation of malate to oxaloacetate and inhibits it in the reverse reaction. In terms of biological role, catalyzes the reversible oxidation of malate to oxaloacetate. Exhibits higher catalytic efficiency for oxaloacetate reduction than for malate oxidation in vitro. Almost equally active both for NADH and NADPH on the bases of the kcat values at pH 6.5, but catalytic efficiency for oxaloacetate reduction is 50-fold higher with NADH. The polypeptide is Malate dehydrogenase (Corynebacterium glutamicum (strain ATCC 13032 / DSM 20300 / JCM 1318 / BCRC 11384 / CCUG 27702 / LMG 3730 / NBRC 12168 / NCIMB 10025 / NRRL B-2784 / 534)).